Here is a 291-residue protein sequence, read N- to C-terminus: Malolactic fermentation system transcriptional activator (291 aa).

In terms of domain architecture, HTH lysR-type spans Met1 to Asp60. The segment at residues Phe20–Lys39 is a DNA-binding region (H-T-H motif).

The protein belongs to the LysR transcriptional regulatory family.

The protein localises to the cytoplasm. In terms of biological role, required for malolactic fermentation. It is most probably a transcriptional activator. This chain is Malolactic fermentation system transcriptional activator (mleR), found in Lactococcus lactis subsp. lactis (strain IL1403) (Streptococcus lactis).